We begin with the raw amino-acid sequence, 61 residues long: Insect toxin BsIT2 (61 aa).

Positions 1-61 (DGYIKKSKGC…RWKYETKTCK (61 aa)) constitute an LCN-type CS-alpha/beta domain. 4 cysteine pairs are disulfide-bonded: cysteine 10-cysteine 60, cysteine 14-cysteine 35, cysteine 21-cysteine 42, and cysteine 25-cysteine 44.

The protein belongs to the long (4 C-C) scorpion toxin superfamily. Sodium channel inhibitor family. Beta subfamily. As to expression, expressed by the venom gland.

The protein localises to the secreted. Functionally, depressant insect beta-toxins cause a transient contraction paralysis followed by a slow flaccid paralysis. They bind voltage-independently at site-4 of sodium channels (Nav) and shift the voltage of activation toward more negative potentials thereby affecting sodium channel activation and promoting spontaneous and repetitive firing. This toxin is active only on insects. The chain is Insect toxin BsIT2 from Hottentotta tamulus sindicus (Scorpion).